The following is a 334-amino-acid chain: Protein-methionine-sulfoxide reductase catalytic subunit MsrP (334 aa).

Positions 1-44 (MKKIRPLTEADVTAESAFFMQRRQVLKALGISAAALSLPSTAQA) form a signal peptide, tat-type signal. Mo-molybdopterin-binding positions include asparagine 88, 91 to 92 (YE), cysteine 146, threonine 181, asparagine 233, arginine 238, and 249 to 251 (GIK).

It belongs to the MsrP family. As to quaternary structure, heterodimer of a catalytic subunit (MsrP) and a heme-binding subunit (MsrQ). Mo-molybdopterin serves as cofactor. In terms of processing, predicted to be exported by the Tat system. The position of the signal peptide cleavage has not been experimentally proven.

The protein resides in the periplasm. The catalysed reaction is L-methionyl-[protein] + a quinone + H2O = L-methionyl-(S)-S-oxide-[protein] + a quinol. The enzyme catalyses L-methionyl-[protein] + a quinone + H2O = L-methionyl-(R)-S-oxide-[protein] + a quinol. In terms of biological role, part of the MsrPQ system that repairs oxidized periplasmic proteins containing methionine sulfoxide residues (Met-O), using respiratory chain electrons. Thus protects these proteins from oxidative-stress damage caused by reactive species of oxygen and chlorine generated by the host defense mechanisms. MsrPQ is essential for the maintenance of envelope integrity under bleach stress, rescuing a wide series of structurally unrelated periplasmic proteins from methionine oxidation, including the primary periplasmic chaperone SurA and the lipoprotein Pal. The catalytic subunit MsrP is non-stereospecific, being able to reduce both (R-) and (S-) diastereoisomers of methionine sulfoxide. The polypeptide is Protein-methionine-sulfoxide reductase catalytic subunit MsrP (Salmonella arizonae (strain ATCC BAA-731 / CDC346-86 / RSK2980)).